Consider the following 157-residue polypeptide: S-ribosylhomocysteine lyase 2 (157 aa).

Fe cation contacts are provided by H54, H58, and C124.

It belongs to the LuxS family. In terms of assembly, homodimer. Requires Fe cation as cofactor.

The enzyme catalyses S-(5-deoxy-D-ribos-5-yl)-L-homocysteine = (S)-4,5-dihydroxypentane-2,3-dione + L-homocysteine. Functionally, involved in the synthesis of autoinducer 2 (AI-2) which is secreted by bacteria and is used to communicate both the cell density and the metabolic potential of the environment. The regulation of gene expression in response to changes in cell density is called quorum sensing. Catalyzes the transformation of S-ribosylhomocysteine (RHC) to homocysteine (HC) and 4,5-dihydroxy-2,3-pentadione (DPD). The protein is S-ribosylhomocysteine lyase 2 of Lactobacillus delbrueckii subsp. bulgaricus (strain ATCC BAA-365 / Lb-18).